The following is a 579-amino-acid chain: Zinc finger protein 382 (579 aa).

Residues 1–12 (MGRPGRKPRGRA) show a composition bias toward basic residues. The interval 1 to 37 (MGRPGRKPRGRARPGLFPFPKEELRQGGSSPANLNAM) is disordered. The mediates interaction with TRIM28 stretch occupies residues 12–135 (ARPGLFPFPK…DKPPKSIVII (124 aa)). Positions 27 to 36 (GGSSPANLNA) are enriched in polar residues. Represses transcription regions lie at residues 40 to 81 (GPVS…FISV) and 105 to 240 (IFPS…PEQR). Residues 42–113 (VSFKDVTVDF…RIFPSQSYLE (72 aa)) form the KRAB domain. A C2H2-type 1; degenerate zinc finger spans residues 241-263 (FEYNKCDSSFLMTGVEFPHGRAH). 9 consecutive C2H2-type zinc fingers follow at residues 325 to 347 (FQCP…ERIH), 353 to 375 (YICC…EKTH), 381 to 403 (YLCV…HKAH), 409 to 431 (YECT…QRTH), 437 to 459 (YQCT…QRTH), 465 to 487 (YICS…QRIH), 493 to 515 (YICS…YRIH), 521 to 543 (NGCP…QKIH), and 549 to 571 (YECQ…QKTH). The segment at 325 to 579 (FQCPYCGNSF…THKTETMRFQ (255 aa)) is required for transcriptional repression activity; probably mediates sequence-specific DNA-binding.

The protein belongs to the krueppel C2H2-type zinc-finger protein family. As to quaternary structure, interacts with TRIM28; enhances the transcriptional repressor activity.

It localises to the nucleus. Its function is as follows. Functions as a sequence-specific transcriptional repressor. This chain is Zinc finger protein 382 (Znf382), found in Mus musculus (Mouse).